The chain runs to 238 residues: ATP synthase subunit a (238 aa).

5 helical membrane-spanning segments follow: residues 18–38 (LTILAMSLLTITIIFILVFWA), 75–95 (YSLLMFILFSFVFVANNLGLM), 112–132 (NFGVDITLSLLVAFICHIEGI), 179–199 (VVTGLLLQLAVLSPFTGPLAF), and 203–223 (IVWTAFSMFIGFIQAYVFIIL).

It belongs to the ATPase A chain family. In terms of assembly, F-type ATPases have 2 components, CF(1) - the catalytic core - and CF(0) - the membrane proton channel. CF(1) has five subunits: alpha(3), beta(3), gamma(1), delta(1), epsilon(1). CF(0) has three main subunits: a(1), b(2) and c(9-12). The alpha and beta chains form an alternating ring which encloses part of the gamma chain. CF(1) is attached to CF(0) by a central stalk formed by the gamma and epsilon chains, while a peripheral stalk is formed by the delta and b chains.

It is found in the cell membrane. In terms of biological role, key component of the proton channel; it plays a direct role in the translocation of protons across the membrane. This chain is ATP synthase subunit a, found in Streptococcus agalactiae serotype III (strain NEM316).